Here is a 149-residue protein sequence, read N- to C-terminus: Nucleoside diphosphate kinase (149 aa).

6 residues coordinate ATP: Lys9, Phe57, Arg85, Thr91, Arg102, and Asn112. The active-site Pros-phosphohistidine intermediate is the His115.

It belongs to the NDK family. Mg(2+) serves as cofactor.

It is found in the cytoplasm. It carries out the reaction a 2'-deoxyribonucleoside 5'-diphosphate + ATP = a 2'-deoxyribonucleoside 5'-triphosphate + ADP. The enzyme catalyses a ribonucleoside 5'-diphosphate + ATP = a ribonucleoside 5'-triphosphate + ADP. In terms of biological role, major role in the synthesis of nucleoside triphosphates other than ATP. The ATP gamma phosphate is transferred to the NDP beta phosphate via a ping-pong mechanism, using a phosphorylated active-site intermediate. The chain is Nucleoside diphosphate kinase from Methanosarcina acetivorans (strain ATCC 35395 / DSM 2834 / JCM 12185 / C2A).